The primary structure comprises 305 residues: Methionyl-tRNA formyltransferase (305 aa).

111 to 114 (SLLP) contacts (6S)-5,6,7,8-tetrahydrofolate.

This sequence belongs to the Fmt family.

The catalysed reaction is L-methionyl-tRNA(fMet) + (6R)-10-formyltetrahydrofolate = N-formyl-L-methionyl-tRNA(fMet) + (6S)-5,6,7,8-tetrahydrofolate + H(+). In terms of biological role, attaches a formyl group to the free amino group of methionyl-tRNA(fMet). The formyl group appears to play a dual role in the initiator identity of N-formylmethionyl-tRNA by promoting its recognition by IF2 and preventing the misappropriation of this tRNA by the elongation apparatus. The chain is Methionyl-tRNA formyltransferase from Campylobacter jejuni subsp. jejuni serotype O:2 (strain ATCC 700819 / NCTC 11168).